Reading from the N-terminus, the 515-residue chain is Putative ribose/galactose/methyl galactoside import ATP-binding protein (515 aa).

ABC transporter domains follow at residues 25-261 (LEVL…VGRE) and 268-515 (LREK…SGLN). 57 to 64 (GENGAGKS) is a binding site for ATP.

It belongs to the ABC transporter superfamily. Carbohydrate importer 2 (CUT2) (TC 3.A.1.2) family.

The protein resides in the cell inner membrane. The catalysed reaction is D-ribose(out) + ATP + H2O = D-ribose(in) + ADP + phosphate + H(+). It carries out the reaction D-galactose(out) + ATP + H2O = D-galactose(in) + ADP + phosphate + H(+). Part of an ABC transporter complex involved in carbohydrate import. Could be involved in ribose, galactose and/or methyl galactoside import. Responsible for energy coupling to the transport system. This Pseudomonas fluorescens (strain ATCC BAA-477 / NRRL B-23932 / Pf-5) protein is Putative ribose/galactose/methyl galactoside import ATP-binding protein.